The sequence spans 101 residues: Small ribosomal subunit protein uS14 (101 aa).

Belongs to the universal ribosomal protein uS14 family. As to quaternary structure, part of the 30S ribosomal subunit. Contacts proteins S3 and S10.

Binds 16S rRNA, required for the assembly of 30S particles and may also be responsible for determining the conformation of the 16S rRNA at the A site. This is Small ribosomal subunit protein uS14 from Cereibacter sphaeroides (strain ATCC 17029 / ATH 2.4.9) (Rhodobacter sphaeroides).